The sequence spans 541 residues: Arginine--tRNA ligase (541 aa).

Residues Ala119–His129 carry the 'HIGH' region motif.

Belongs to the class-I aminoacyl-tRNA synthetase family. In terms of assembly, monomer.

The protein localises to the cytoplasm. It carries out the reaction tRNA(Arg) + L-arginine + ATP = L-arginyl-tRNA(Arg) + AMP + diphosphate. The polypeptide is Arginine--tRNA ligase (Helicobacter pylori (strain HPAG1)).